The following is a 215-amino-acid chain: HTH-type transcriptional repressor FabR (215 aa).

The 61-residue stretch at Lys10–Leu70 folds into the HTH tetR-type domain. Positions Ser33–Phe52 form a DNA-binding region, H-T-H motif.

As to quaternary structure, homodimer.

The protein resides in the cytoplasm. In terms of biological role, represses the transcription of fabB, involved in unsaturated fatty acid (UFA) biosynthesis. By controlling UFA production, FabR directly influences the physical properties of the membrane bilayer. The polypeptide is HTH-type transcriptional repressor FabR (Shigella boydii serotype 18 (strain CDC 3083-94 / BS512)).